The sequence spans 544 residues: Membrane protein insertase YidC (544 aa).

Transmembrane regions (helical) follow at residues 13 to 33 (LSLF…SWML), 321 to 341 (LWYL…DVIP), 343 to 363 (WGLS…PLTF), 409 to 429 (LGGC…YSLV), 461 to 481 (LYFV…FTQL), and 506 to 526 (MPIM…IYWI).

It belongs to the OXA1/ALB3/YidC family. Type 1 subfamily. Interacts with the Sec translocase complex via SecD. Specifically interacts with transmembrane segments of nascent integral membrane proteins during membrane integration.

The protein localises to the cell inner membrane. Its function is as follows. Required for the insertion and/or proper folding and/or complex formation of integral membrane proteins into the membrane. Involved in integration of membrane proteins that insert both dependently and independently of the Sec translocase complex, as well as at least some lipoproteins. Aids folding of multispanning membrane proteins. In Borreliella afzelii (strain PKo) (Borrelia afzelii), this protein is Membrane protein insertase YidC.